A 511-amino-acid polypeptide reads, in one-letter code: Light-independent protochlorophyllide reductase subunit B (511 aa).

Asp36 serves as a coordination point for [4Fe-4S] cluster. Residue Asp299 is the Proton donor of the active site. 434-435 provides a ligand contact to substrate; sequence GM.

The protein belongs to the ChlB/BchB/BchZ family. As to quaternary structure, protochlorophyllide reductase is composed of three subunits; ChlL, ChlN and ChlB. Forms a heterotetramer of two ChlB and two ChlN subunits. [4Fe-4S] cluster is required as a cofactor.

The protein localises to the plastid. It is found in the chloroplast. The enzyme catalyses chlorophyllide a + oxidized 2[4Fe-4S]-[ferredoxin] + 2 ADP + 2 phosphate = protochlorophyllide a + reduced 2[4Fe-4S]-[ferredoxin] + 2 ATP + 2 H2O. It participates in porphyrin-containing compound metabolism; chlorophyll biosynthesis (light-independent). Functionally, component of the dark-operative protochlorophyllide reductase (DPOR) that uses Mg-ATP and reduced ferredoxin to reduce ring D of protochlorophyllide (Pchlide) to form chlorophyllide a (Chlide). This reaction is light-independent. The NB-protein (ChlN-ChlB) is the catalytic component of the complex. The sequence is that of Light-independent protochlorophyllide reductase subunit B from Huperzia lucidula (Shining clubmoss).